Consider the following 266-residue polypeptide: Tryptophan synthase alpha chain (266 aa).

Active-site proton acceptor residues include Glu-45 and Asp-56.

This sequence belongs to the TrpA family. In terms of assembly, tetramer of two alpha and two beta chains.

It carries out the reaction (1S,2R)-1-C-(indol-3-yl)glycerol 3-phosphate + L-serine = D-glyceraldehyde 3-phosphate + L-tryptophan + H2O. Its pathway is amino-acid biosynthesis; L-tryptophan biosynthesis; L-tryptophan from chorismate: step 5/5. Functionally, the alpha subunit is responsible for the aldol cleavage of indoleglycerol phosphate to indole and glyceraldehyde 3-phosphate. This chain is Tryptophan synthase alpha chain, found in Novosphingobium aromaticivorans (strain ATCC 700278 / DSM 12444 / CCUG 56034 / CIP 105152 / NBRC 16084 / F199).